Reading from the N-terminus, the 218-residue chain is uncharacterized protein (218 aa).

Helical transmembrane passes span 9-29, 42-62, 67-87, 107-127, 134-154, 159-179, and 192-212; these read LLVI…VIAM, AIIL…SAAV, IPFL…QLLI, TIVL…AGAS, VVIG…LIHI, IPLL…EMIV, and GTVE…ASIY.

It belongs to the TerC family.

The protein resides in the cell membrane. This is an uncharacterized protein from Bacillus subtilis (strain 168).